The chain runs to 643 residues: Immediate-early phosphoprotein 57 (643 aa).

Disordered stretches follow at residues 1–180 and 194–329; these read MAQK…GGCA and TGWG…QCPP. Acidic residues predominate over residues 24 to 52; it reads LDFSESEEEEEEEESSSESESDEDSDMEV. Composition is skewed to low complexity over residues 57-71 and 83-100; these read QEAGPPEQCQQQPQQ and QQPQQREQGPPQQQQQQR. A compositionally biased stretch (basic and acidic residues) spans 103-113; sequence KRGEESGDARP. Low complexity predominate over residues 162-171; the sequence is QQPQSQAAQP. The span at 215–241 shows a compositional bias: basic and acidic residues; it reads RRGDEDRRSGRDRRRREGRERDRESRS. A compositionally biased stretch (low complexity) spans 284–297; it reads AGPSQAQAAQAARA. A compositionally biased stretch (basic and acidic residues) spans 298-307; the sequence is PRQEQGERRQ. Pro residues predominate over residues 320 to 329; sequence QQCPPQQCPP.

This sequence belongs to the herpesviridae UL69 family.

This Equus caballus (Horse) protein is Immediate-early phosphoprotein 57 (57).